The primary structure comprises 297 residues: Cyclin-dependent kinase 1 (297 aa).

The residue at position 1 (methionine 1) is an N-acetylmethionine. Tyrosine 4 is subject to Phosphotyrosine; by PKR. The Protein kinase domain maps to 4–287; that stretch reads YTKIEKIGEG…GKMALNHPYF (284 aa). An N6-acetyllysine; alternate mark is found at lysine 6 and lysine 9. Residues lysine 6 and lysine 9 each participate in a glycyl lysine isopeptide (Lys-Gly) (interchain with G-Cter in SUMO2); alternate cross-link. 10-18 is an ATP binding site; it reads IGEGTYGVV. Threonine 14 carries the phosphothreonine; by PKMYT1 modification. At tyrosine 15 the chain carries Phosphotyrosine; by PKMYT1, WEE1, WEE2 and PKC/PRKCD. Residue tyrosine 19 is modified to Phosphotyrosine. Lysine 20 is covalently cross-linked (Glycyl lysine isopeptide (Lys-Gly) (interchain with G-Cter in SUMO2)). ATP is bound at residue lysine 33. Serine 39 carries the phosphoserine modification. Tyrosine 77 carries the post-translational modification Phosphotyrosine. Aspartate 128 serves as the catalytic Proton acceptor. Residue lysine 139 forms a Glycyl lysine isopeptide (Lys-Gly) (interchain with G-Cter in SUMO2) linkage. Residue threonine 141 is modified to Phosphothreonine. Residue threonine 161 is modified to Phosphothreonine; by CAK. Position 178 is a phosphoserine (serine 178). The residue at position 222 (threonine 222) is a Phosphothreonine. Residue lysine 245 is modified to N6-succinyllysine. Phosphoserine is present on serine 248.

It belongs to the protein kinase superfamily. CMGC Ser/Thr protein kinase family. CDC2/CDKX subfamily. Forms a stable but non-covalent complex with a regulatory subunit and with a cyclin. The cyclin subunit imparts substrate specificity to the complex. Interacts with cyclins-B (CCNB1, CCNB2 and CCNB3) to form a serine/threonine kinase holoenzyme complex also known as maturation promoting factor (MPF). Promotes G2-M transition when in complex with a cyclin-B. Can also form CDK1-cylin-D and CDK1-cyclin-E complexes that phosphorylate RB1 in vitro. Associates with cyclins-A and B1 during S-phase in regenerating hepatocytes. Interacts with DLGAP5. Binds to the CDK inhibitors CDKN1A/p21 and CDKN1B/p27. Interacts with catalytically active CCNB1 and RALBP1 during mitosis to form an endocytotic complex during interphase. Interacts with FANCC. Interacts with CEP63; this interaction recruits CDK1 to centrosomes. Interacts with CENPA. Interacts with NR1D1. Interacts with proteasome subunit PSMA8; to participate in meiosis progression during spermatogenesis. In terms of assembly, unable to complex with cyclin-B1 and also fails to bind to CDKN1A/p21. As to quaternary structure, (Microbial infection) Interacts with severe fever with thrombocytopenia syndrome virus (SFTSV) NSs; this interaction is inclusion body dependent, it inhibits the formation and nuclear import of the cyclin B1-CDK1 complex and leads to cell cycle arrest. Phosphorylation at Thr-161 by CAK/CDK7 activates kinase activity. Phosphorylation at Thr-14 and Tyr-15 by PKMYT1 prevents nuclear translocation. Phosphorylation at Tyr-15 by WEE1 and WEE2 inhibits the protein kinase activity and acts as a negative regulator of entry into mitosis (G2 to M transition). Phosphorylation by PKMYT1 and WEE1 takes place during mitosis to keep CDK1-cyclin-B complexes inactive until the end of G2. By the end of G2, PKMYT1 and WEE1 are inactivated, but CDC25A and CDC25B are activated. Dephosphorylation by active CDC25A and CDC25B at Thr-14 and Tyr-15, leads to CDK1 activation at the G2-M transition. Phosphorylation at Tyr-15 by WEE2 during oogenesis is required to maintain meiotic arrest in oocytes during the germinal vesicle (GV) stage, a long period of quiescence at dictyate prophase I, leading to prevent meiotic reentry. Phosphorylation by WEE2 is also required for metaphase II exit during egg activation to ensure exit from meiosis in oocytes and promote pronuclear formation. Phosphorylated at Tyr-4 by PKR/EIF2AK2 upon genotoxic stress. This phosphorylation triggers CDK1 polyubiquitination and subsequent proteolysis, thus leading to G2 arrest. In response to UV irradiation, phosphorylation at Tyr-15 by PRKCD activates the G2/M DNA damage checkpoint. In terms of processing, polyubiquitinated upon genotoxic stress. Found in breast cancer tissues.

It is found in the nucleus. The protein resides in the cytoplasm. Its subcellular location is the mitochondrion. It localises to the cytoskeleton. The protein localises to the microtubule organizing center. It is found in the centrosome. The protein resides in the spindle. The enzyme catalyses L-seryl-[protein] + ATP = O-phospho-L-seryl-[protein] + ADP + H(+). It carries out the reaction L-threonyl-[protein] + ATP = O-phospho-L-threonyl-[protein] + ADP + H(+). The catalysed reaction is [DNA-directed RNA polymerase] + ATP = phospho-[DNA-directed RNA polymerase] + ADP + H(+). With respect to regulation, phosphorylation at Thr-14 or Tyr-15 inactivates the enzyme, while phosphorylation at Thr-161 activates it. Activated through a multistep process; binding to cyclin-B is required for relocation of cyclin-kinase complexes to the nucleus, activated by CAK/CDK7-mediated phosphorylation on Thr-161, and CDC25-mediated dephosphorylation of inhibitory phosphorylation on Thr-14 and Tyr-15. Activity is restricted during S-phase in an ATR-dependent manner to prevent premature entry into G2. Repressed by the CDK inhibitors CDKN1A/p21 and CDKN1B/p27 during the G1 phase and by CDKN1A/p21 at the G1-S checkpoint upon DNA damage. Transient activation by rapid and transient dephosphorylation at Tyr-15 triggered by TGFB1. Inhibited by flavopiridol and derivatives, pyrimidine derivatives, pyridine derivatives, purine derivatives, staurosporine, paullones, oxoindoles, indazole analogs, indolin-2-ones, pyrazolo[3,4-b]pyridines, imidazo[1,2-a]pyridine (AZ703), thiazolinone analogs(RO-3306), thiazol urea, macrocyclic quinoxalin-2-one, pyrrolo[2,3-a]carbazole, pyrazolo[1,5-a]-1,3,5-triazine, pyrazolo[1,5-a]pyrimidine (Dinaciclib, SCH 727965), 2-(1-ethyl-2-hydroxyethylamino)-6-benzylamino-9-isopropylpurine (roscovitine), olomoucine, AG-024322, AT-7519, P276-00, R547/Ro-4584820 and SNS-032/BMS-387032. Functionally, plays a key role in the control of the eukaryotic cell cycle by modulating the centrosome cycle as well as mitotic onset; promotes G2-M transition via association with multiple interphase cyclins. Phosphorylates PARVA/actopaxin, APC, AMPH, APC, BARD1, Bcl-xL/BCL2L1, BRCA2, CALD1, CASP8, CDC7, CDC20, CDC25A, CDC25C, CC2D1A, CENPA, CSNK2 proteins/CKII, FZR1/CDH1, CDK7, CEBPB, CHAMP1, DMD/dystrophin, EEF1 proteins/EF-1, EZH2, KIF11/EG5, EGFR, FANCG, FOS, GFAP, GOLGA2/GM130, GRASP1, UBE2A/hHR6A, HIST1H1 proteins/histone H1, HMGA1, HIVEP3/KRC, KAT5, LMNA, LMNB, LBR, MKI67, LATS1, MAP1B, MAP4, MARCKS, MCM2, MCM4, MKLP1, MLST8, MYB, NEFH, NFIC, NPC/nuclear pore complex, PITPNM1/NIR2, NPM1, NCL, NUCKS1, NPM1/numatrin, ORC1, PRKAR2A, EEF1E1/p18, EIF3F/p47, p53/TP53, NONO/p54NRB, PAPOLA, PLEC/plectin, RB1, TPPP, UL40/R2, RAB4A, RAP1GAP, RBBP8/CtIP, RCC1, RPS6KB1/S6K1, KHDRBS1/SAM68, ESPL1, SKI, BIRC5/survivin, STIP1, TEX14, beta-tubulins, MAPT/TAU, NEDD1, VIM/vimentin, TK1, FOXO1, RUNX1/AML1, SAMHD1, SIRT2, CGAS and RUNX2. CDK1/CDC2-cyclin-B controls pronuclear union in interphase fertilized eggs. Essential for early stages of embryonic development. During G2 and early mitosis, CDC25A/B/C-mediated dephosphorylation activates CDK1/cyclin complexes which phosphorylate several substrates that trigger at least centrosome separation, Golgi dynamics, nuclear envelope breakdown and chromosome condensation. Once chromosomes are condensed and aligned at the metaphase plate, CDK1 activity is switched off by WEE1- and PKMYT1-mediated phosphorylation to allow sister chromatid separation, chromosome decondensation, reformation of the nuclear envelope and cytokinesis. Phosphorylates KRT5 during prometaphase and metaphase. Inactivated by PKR/EIF2AK2- and WEE1-mediated phosphorylation upon DNA damage to stop cell cycle and genome replication at the G2 checkpoint thus facilitating DNA repair. Reactivated after successful DNA repair through WIP1-dependent signaling leading to CDC25A/B/C-mediated dephosphorylation and restoring cell cycle progression. Catalyzes lamin (LMNA, LMNB1 and LMNB2) phosphorylation at the onset of mitosis, promoting nuclear envelope breakdown. In proliferating cells, CDK1-mediated FOXO1 phosphorylation at the G2-M phase represses FOXO1 interaction with 14-3-3 proteins and thereby promotes FOXO1 nuclear accumulation and transcription factor activity, leading to cell death of postmitotic neurons. The phosphorylation of beta-tubulins regulates microtubule dynamics during mitosis. NEDD1 phosphorylation promotes PLK1-mediated NEDD1 phosphorylation and subsequent targeting of the gamma-tubulin ring complex (gTuRC) to the centrosome, an important step for spindle formation. In addition, CC2D1A phosphorylation regulates CC2D1A spindle pole localization and association with SCC1/RAD21 and centriole cohesion during mitosis. The phosphorylation of Bcl-xL/BCL2L1 after prolongated G2 arrest upon DNA damage triggers apoptosis. In contrast, CASP8 phosphorylation during mitosis prevents its activation by proteolysis and subsequent apoptosis. This phosphorylation occurs in cancer cell lines, as well as in primary breast tissues and lymphocytes. EZH2 phosphorylation promotes H3K27me3 maintenance and epigenetic gene silencing. CALD1 phosphorylation promotes Schwann cell migration during peripheral nerve regeneration. CDK1-cyclin-B complex phosphorylates NCKAP5L and mediates its dissociation from centrosomes during mitosis. Regulates the amplitude of the cyclic expression of the core clock gene BMAL1 by phosphorylating its transcriptional repressor NR1D1, and this phosphorylation is necessary for SCF(FBXW7)-mediated ubiquitination and proteasomal degradation of NR1D1. Phosphorylates EML3 at 'Thr-881' which is essential for its interaction with HAUS augmin-like complex and TUBG1. Phosphorylates CGAS during mitosis, leading to its inhibition, thereby preventing CGAS activation by self DNA during mitosis. Phosphorylates SKA3 on multiple sites during mitosis which promotes SKA3 binding to the NDC80 complex and anchoring of the SKA complex to kinetochores, to enable stable attachment of mitotic spindle microtubules to kinetochores. In terms of biological role, (Microbial infection) Acts as a receptor for hepatitis C virus (HCV) in hepatocytes and facilitates its cell entry. This chain is Cyclin-dependent kinase 1 (CDK1), found in Homo sapiens (Human).